Consider the following 737-residue polypeptide: Polyribonucleotide nucleotidyltransferase (737 aa).

Mg(2+) is bound by residues Asp489 and Asp495. Positions 556–615 (PKIDTIKIDVDKIKIVIGKGGETIDKIIAETGVKIDIDEEGNVSIYSSDQDAINRAKEII) constitute a KH domain. An S1 motif domain is found at 625-693 (DEVYRAKVVR…EKGRIDASMK (69 aa)). Residues 691–737 (SMKALLPRPPKPEHDEKGEKSERPHRPRHHKDHKPKKEFTETPKDSE) form a disordered region. A compositionally biased stretch (basic and acidic residues) spans 700–714 (PKPEHDEKGEKSERP). Over residues 715 to 724 (HRPRHHKDHK) the composition is skewed to basic residues. The span at 725–737 (PKKEFTETPKDSE) shows a compositional bias: basic and acidic residues.

Belongs to the polyribonucleotide nucleotidyltransferase family. It depends on Mg(2+) as a cofactor.

Its subcellular location is the cytoplasm. It carries out the reaction RNA(n+1) + phosphate = RNA(n) + a ribonucleoside 5'-diphosphate. Involved in mRNA degradation. Catalyzes the phosphorolysis of single-stranded polyribonucleotides processively in the 3'- to 5'-direction. The chain is Polyribonucleotide nucleotidyltransferase from Streptococcus pneumoniae serotype 19F (strain G54).